The primary structure comprises 293 residues: 4-hydroxy-tetrahydrodipicolinate synthase (293 aa).

T47 contacts pyruvate. Y136 (proton donor/acceptor) is an active-site residue. The active-site Schiff-base intermediate with substrate is the K164. I206 contacts pyruvate.

This sequence belongs to the DapA family. As to quaternary structure, homotetramer; dimer of dimers.

The protein localises to the cytoplasm. It carries out the reaction L-aspartate 4-semialdehyde + pyruvate = (2S,4S)-4-hydroxy-2,3,4,5-tetrahydrodipicolinate + H2O + H(+). The protein operates within amino-acid biosynthesis; L-lysine biosynthesis via DAP pathway; (S)-tetrahydrodipicolinate from L-aspartate: step 3/4. Its function is as follows. Catalyzes the condensation of (S)-aspartate-beta-semialdehyde [(S)-ASA] and pyruvate to 4-hydroxy-tetrahydrodipicolinate (HTPA). The polypeptide is 4-hydroxy-tetrahydrodipicolinate synthase (Listeria monocytogenes serovar 1/2a (strain ATCC BAA-679 / EGD-e)).